The following is a 349-amino-acid chain: S-adenosylmethionine:tRNA ribosyltransferase-isomerase (349 aa).

The protein belongs to the QueA family. In terms of assembly, monomer.

It is found in the cytoplasm. It carries out the reaction 7-aminomethyl-7-carbaguanosine(34) in tRNA + S-adenosyl-L-methionine = epoxyqueuosine(34) in tRNA + adenine + L-methionine + 2 H(+). It participates in tRNA modification; tRNA-queuosine biosynthesis. In terms of biological role, transfers and isomerizes the ribose moiety from AdoMet to the 7-aminomethyl group of 7-deazaguanine (preQ1-tRNA) to give epoxyqueuosine (oQ-tRNA). This chain is S-adenosylmethionine:tRNA ribosyltransferase-isomerase, found in Pseudomonas putida (strain GB-1).